A 469-amino-acid chain; its full sequence is Ufm1-specific protease 2 (469 aa).

M1 carries the N-acetylmethionine modification. Catalysis depends on residues C302, D426, and H428.

This sequence belongs to the peptidase C78 family.

Its subcellular location is the endoplasmic reticulum. It localises to the cytoplasm. It is found in the nucleus. In terms of biological role, thiol-dependent isopeptidase that specifically cleaves UFM1, a ubiquitin-like modifier protein, from conjugated proteins, such as CD274/PD-L1, CYB5R3, DDRGK1, MRE11, RPL26/uL24, TRIP4 and RPL26/uL24. While it is also able to mediate the processing of UFM1 precursors, a prerequisite for conjugation reactions, UFSP2 mainly acts as a protein deUFMylase that mediates deconjugation of UFM1 from target proteins. Mediates deUFMylation of RPL26/uL24, a critical step to release the UFM1 ribosome E3 ligase (UREL) complex during the recycling of 60S ribosome subunits from the endoplasmic reticulum. Catalyzes deUFMylation of TRIP4, regulating intracellular nuclear receptors transactivation and thereby regulate cell proliferation and differentiation. This chain is Ufm1-specific protease 2, found in Pongo abelii (Sumatran orangutan).